We begin with the raw amino-acid sequence, 179 residues long: Large ribosomal subunit protein uL5 (179 aa).

This sequence belongs to the universal ribosomal protein uL5 family. As to quaternary structure, part of the 50S ribosomal subunit; part of the 5S rRNA/L5/L18/L25 subcomplex. Contacts the 5S rRNA and the P site tRNA. Forms a bridge to the 30S subunit in the 70S ribosome.

Functionally, this is one of the proteins that bind and probably mediate the attachment of the 5S RNA into the large ribosomal subunit, where it forms part of the central protuberance. In the 70S ribosome it contacts protein S13 of the 30S subunit (bridge B1b), connecting the 2 subunits; this bridge is implicated in subunit movement. Contacts the P site tRNA; the 5S rRNA and some of its associated proteins might help stabilize positioning of ribosome-bound tRNAs. The protein is Large ribosomal subunit protein uL5 of Burkholderia mallei (strain ATCC 23344).